The primary structure comprises 1363 residues: Kinesin-like protein kif7 (1363 aa).

The 333-residue stretch at 15–347 folds into the Kinesin motor domain; the sequence is AVQVAVRVRP…LNYAKRARNI (333 aa). 94–101 contacts ATP; it reads GQTGSGKT. Coiled coils occupy residues 358 to 385 and 491 to 552; these read EPDRIEGLELQIKALRRALENRQRSETR and EDWR…LLAQ. Residues 603–622 show a composition bias toward polar residues; sequence DSSSYSEQTQWDGTHGNTHC. The disordered stretch occupies residues 603–642; the sequence is DSSSYSEQTQWDGTHGNTHCESSRKLNRDEDGHMQTTRDK. The span at 623 to 640 shows a compositional bias: basic and acidic residues; that stretch reads ESSRKLNRDEDGHMQTTR. Coiled-coil stretches lie at residues 714 to 1068 and 1116 to 1225; these read LLQA…AAIE and DKVV…LREM. The tract at residues 1314-1346 is disordered; it reads IVQPGMNSTHWSGSTSLPVTRPRREPRRSSLNT. Over residues 1318–1331 the composition is skewed to polar residues; that stretch reads GMNSTHWSGSTSLP.

The protein belongs to the TRAFAC class myosin-kinesin ATPase superfamily. Kinesin family. KIF27 subfamily. Binds microtubules. Interacts with gli1 and sufu.

It is found in the cytoplasm. Its subcellular location is the cytoskeleton. It localises to the cell projection. The protein localises to the cilium. Its function is as follows. Acts downstream of smo as an intracellular repressor of hedgehog signaling pathway, mainly through the suppression of gli1 activity. This negative regulatory effect is enhanced in conjunction with the suppressor of fused (sufu) protein. Positively regulates gli2a activity by promoting its dissociation from sufu. Involved in the regulation of microtubular dynamics. This is Kinesin-like protein kif7 (kif7) from Danio rerio (Zebrafish).